The following is a 113-amino-acid chain: uncharacterized protein (113 aa).

This sequence to H.influenzae HI_1053 and P.denitrificans COX locus Uncharacterized protein 4.

This is an uncharacterized protein from Cupriavidus necator (strain ATCC 17699 / DSM 428 / KCTC 22496 / NCIMB 10442 / H16 / Stanier 337) (Ralstonia eutropha).